A 446-amino-acid polypeptide reads, in one-letter code: tRNA-2-methylthio-N(6)-dimethylallyladenosine synthase (446 aa).

Residues K3–R124 form the MTTase N-terminal domain. [4Fe-4S] cluster contacts are provided by C12, C48, C87, C162, C166, and C169. Residues Y148–A380 form the Radical SAM core domain. Positions E383–R446 constitute a TRAM domain.

Belongs to the methylthiotransferase family. MiaB subfamily. As to quaternary structure, monomer. The cofactor is [4Fe-4S] cluster.

The protein localises to the cytoplasm. It carries out the reaction N(6)-dimethylallyladenosine(37) in tRNA + (sulfur carrier)-SH + AH2 + 2 S-adenosyl-L-methionine = 2-methylsulfanyl-N(6)-dimethylallyladenosine(37) in tRNA + (sulfur carrier)-H + 5'-deoxyadenosine + L-methionine + A + S-adenosyl-L-homocysteine + 2 H(+). Catalyzes the methylthiolation of N6-(dimethylallyl)adenosine (i(6)A), leading to the formation of 2-methylthio-N6-(dimethylallyl)adenosine (ms(2)i(6)A) at position 37 in tRNAs that read codons beginning with uridine. This chain is tRNA-2-methylthio-N(6)-dimethylallyladenosine synthase, found in Rickettsia bellii (strain OSU 85-389).